The following is a 464-amino-acid chain: Cysteine--tRNA ligase (464 aa).

Zn(2+) is bound at residue Cys-28. Residues 30 to 40 carry the 'HIGH' region motif; that stretch reads ITAYDFCHIGH. Zn(2+) contacts are provided by Cys-210, His-235, and Glu-239. The 'KMSKS' region motif lies at 267-271; the sequence is KMSKS. Lys-270 contributes to the ATP binding site.

This sequence belongs to the class-I aminoacyl-tRNA synthetase family. Monomer. Requires Zn(2+) as cofactor.

It localises to the cytoplasm. The catalysed reaction is tRNA(Cys) + L-cysteine + ATP = L-cysteinyl-tRNA(Cys) + AMP + diphosphate. The sequence is that of Cysteine--tRNA ligase from Buchnera aphidicola subsp. Baizongia pistaciae (strain Bp).